We begin with the raw amino-acid sequence, 59 residues long: Pycsar effector protein MePycTM (59 aa).

Residues 36-56 form a helical membrane-spanning segment; sequence VAVAIYLLGAAMLSSGAAVLA.

It is found in the cell membrane. Functionally, pycsar (pyrimidine cyclase system for antiphage resistance) provides immunity against bacteriophage. The pyrimidine cyclase (PycC) synthesizes cyclic nucleotides in response to infection; these serve as specific second messenger signals. The signals activate the adjacent effector, leading to bacterial cell death and abortive phage infection. A clade D Pycsar system. The effector gene of a two-gene Pycsar system. Expression of this and adjacent uridylate cyclase MePycC (AC A0A1C5G2V9) probably confers resistance to bacteriophage. The genes are probably only expressed in response to bacteriophage infection. Probably only responds to cUMP (produced by its cognate NTP cyclase), acts by impairing membrane integrity. The protein is Pycsar effector protein MePycTM of Micromonospora echinofusca.